A 162-amino-acid chain; its full sequence is 2-C-methyl-D-erythritol 2,4-cyclodiphosphate synthase (162 aa).

Residues aspartate 8 and histidine 10 each coordinate a divalent metal cation. 4-CDP-2-C-methyl-D-erythritol 2-phosphate contacts are provided by residues 8–10 and 36–37; these read DVH and HS. A divalent metal cation is bound at residue histidine 44. 4-CDP-2-C-methyl-D-erythritol 2-phosphate contacts are provided by residues 58–60, 63–67, 102–108, 134–137, phenylalanine 141, and arginine 144; these read DIG, FPDTD, AQAPKMA, and TTTE.

This sequence belongs to the IspF family. As to quaternary structure, homotrimer. A divalent metal cation serves as cofactor.

It catalyses the reaction 4-CDP-2-C-methyl-D-erythritol 2-phosphate = 2-C-methyl-D-erythritol 2,4-cyclic diphosphate + CMP. It functions in the pathway isoprenoid biosynthesis; isopentenyl diphosphate biosynthesis via DXP pathway; isopentenyl diphosphate from 1-deoxy-D-xylulose 5-phosphate: step 4/6. Functionally, involved in the biosynthesis of isopentenyl diphosphate (IPP) and dimethylallyl diphosphate (DMAPP), two major building blocks of isoprenoid compounds. Catalyzes the conversion of 4-diphosphocytidyl-2-C-methyl-D-erythritol 2-phosphate (CDP-ME2P) to 2-C-methyl-D-erythritol 2,4-cyclodiphosphate (ME-CPP) with a corresponding release of cytidine 5-monophosphate (CMP). The chain is 2-C-methyl-D-erythritol 2,4-cyclodiphosphate synthase from Yersinia enterocolitica serotype O:8 / biotype 1B (strain NCTC 13174 / 8081).